The sequence spans 150 residues: Ribonuclease pancreatic delta-type (150 aa).

The signal sequence occupies residues 1-25 (MGLEKSFILFSLLVLVLGWVQPSLG). Arg-35 is a binding site for substrate. His-37 functions as the Proton acceptor in the catalytic mechanism. 4 disulfide bridges follow: Cys-51/Cys-110, Cys-65/Cys-121, Cys-83/Cys-136, and Cys-90/Cys-98. Substrate is bound by residues 66 to 70 (KRVNT), Lys-91, and Arg-111. His-145 serves as the catalytic Proton donor.

Belongs to the pancreatic ribonuclease family. As to quaternary structure, monomer.

It is found in the secreted. The enzyme catalyses an [RNA] containing cytidine + H2O = an [RNA]-3'-cytidine-3'-phosphate + a 5'-hydroxy-ribonucleotide-3'-[RNA].. The catalysed reaction is an [RNA] containing uridine + H2O = an [RNA]-3'-uridine-3'-phosphate + a 5'-hydroxy-ribonucleotide-3'-[RNA].. Endonuclease that catalyzes the cleavage of RNA on the 3' side of pyrimidine nucleotides. Acts on single-stranded and double-stranded RNA. The protein is Ribonuclease pancreatic delta-type (Rnase1d) of Rattus norvegicus (Rat).